The sequence spans 358 residues: Protein IncC (358 aa).

The segment at 1 to 101 is disordered; it reads MGAIHEETAN…VGSRRQEETG (101 aa). Basic and acidic residues predominate over residues 88-99; sequence HRQEVGSRRQEE.

It belongs to the ParA family.

Functionally, this is one of the proteins encoded by the trfB operon; it is involved in plasmid maintenance and replication. This is Protein IncC (incC) from Escherichia coli.